Consider the following 500-residue polypeptide: Putative (R)-citramalate synthase CimA (500 aa).

The region spanning 9 to 258 (LRFFDTTLRD…DTRIRTERLY (250 aa)) is the Pyruvate carboxyltransferase domain.

This sequence belongs to the alpha-IPM synthase/homocitrate synthase family. As to quaternary structure, homodimer.

It catalyses the reaction pyruvate + acetyl-CoA + H2O = (3R)-citramalate + CoA + H(+). It participates in amino-acid biosynthesis; L-isoleucine biosynthesis; 2-oxobutanoate from pyruvate: step 1/3. Catalyzes the condensation of pyruvate and acetyl-coenzyme A to form (R)-citramalate. This Methanosphaerula palustris (strain ATCC BAA-1556 / DSM 19958 / E1-9c) protein is Putative (R)-citramalate synthase CimA.